A 389-amino-acid chain; its full sequence is Succinate--CoA ligase [ADP-forming] subunit beta (389 aa).

The ATP-grasp domain occupies 9–244 (KEIFRSMGVA…LDEEDPKEIE (236 aa)). Residues Lys-46, 53–55 (GRG), Glu-99, Cys-102, and Glu-107 each bind ATP. Mg(2+) contacts are provided by Asn-199 and Asp-213. Residues Asn-264 and 321–323 (GIM) each bind substrate.

The protein belongs to the succinate/malate CoA ligase beta subunit family. In terms of assembly, heterotetramer of two alpha and two beta subunits. It depends on Mg(2+) as a cofactor.

The enzyme catalyses succinate + ATP + CoA = succinyl-CoA + ADP + phosphate. It carries out the reaction GTP + succinate + CoA = succinyl-CoA + GDP + phosphate. It participates in carbohydrate metabolism; tricarboxylic acid cycle; succinate from succinyl-CoA (ligase route): step 1/1. In terms of biological role, succinyl-CoA synthetase functions in the citric acid cycle (TCA), coupling the hydrolysis of succinyl-CoA to the synthesis of either ATP or GTP and thus represents the only step of substrate-level phosphorylation in the TCA. The beta subunit provides nucleotide specificity of the enzyme and binds the substrate succinate, while the binding sites for coenzyme A and phosphate are found in the alpha subunit. This chain is Succinate--CoA ligase [ADP-forming] subunit beta, found in Macrococcus caseolyticus (strain JCSC5402) (Macrococcoides caseolyticum).